The sequence spans 378 residues: Glutamate 5-kinase (378 aa).

An ATP-binding site is contributed by Lys-19. The substrate site is built by Ser-59, Asp-146, and Asn-158. Residue 178-179 (TD) participates in ATP binding. Positions 285-363 (RGSVTVDPGA…SEFEKLLGYT (79 aa)) constitute a PUA domain.

This sequence belongs to the glutamate 5-kinase family.

The protein localises to the cytoplasm. It catalyses the reaction L-glutamate + ATP = L-glutamyl 5-phosphate + ADP. Its pathway is amino-acid biosynthesis; L-proline biosynthesis; L-glutamate 5-semialdehyde from L-glutamate: step 1/2. Catalyzes the transfer of a phosphate group to glutamate to form L-glutamate 5-phosphate. The sequence is that of Glutamate 5-kinase from Polaromonas naphthalenivorans (strain CJ2).